Consider the following 92-residue polypeptide: Cytochrome c2 (92 aa).

Residues Cys12, Cys15, His16, and Met66 each coordinate heme c.

This sequence belongs to the cytochrome c family. Post-translationally, binds 1 heme c group covalently per subunit.

Its function is as follows. Cytochrome c2 is found mainly in purple, non-sulfur, photosynthetic bacteria where it functions as the electron donor to the oxidized bacteriochlorophyll in the photophosphorylation pathway. However, it may also have a role in the respiratory chain and is found in some non-photosynthetic bacteria. The sequence is that of Cytochrome c2 from Rhodocyclus tenuis (Rhodospirillum tenue).